A 267-amino-acid chain; its full sequence is C-type lectin domain family 12 member A (267 aa).

Over Met-1 to Val-43 the chain is Cytoplasmic. An ITIM motif motif is present at residues Ile-5–Leu-10. Tyr-7 carries the post-translational modification Phosphotyrosine. Residues Leu-44–Phe-64 form a helical; Signal-anchor for type II membrane protein membrane-spanning segment. Topologically, residues Tyr-65 to Arg-267 are extracellular. 2 N-linked (GlcNAc...) asparagine glycosylation sites follow: Asn-98 and Asn-105. Cystine bridges form between Cys-118–Cys-130, Cys-133–Cys-144, Cys-161–Cys-246, and Cys-225–Cys-238. The C-type lectin domain maps to Tyr-140–Glu-247. Asn-165 carries an N-linked (GlcNAc...) asparagine glycan.

As to quaternary structure, homodimer; disulfide-linked. Interacts (when the ITIM motif is phosphorylated) with PTPN6 and PTPN11. In terms of processing, phosphorylated at Tyr-7 by SRC in the ITIM motif following ligand-binding, promoting recruitment of tyrosine-protein phosphatases PTPN6 and PTPN11. In terms of tissue distribution, mainly expressed in lymphoid tissues. Preferentially expressed in peripheral blood leukocytes; less frequent in thymus, spleen, heart, brain and lung; and undetectable in other tissues.

It is found in the cell membrane. Its function is as follows. Myeloid inhibitory C-type lectin receptor that acts as a negative regulator of myeloid cell activation. Myeloid cell inhibition is required to limit proinflammatory pathways and protect against excessive inflammation. Specifically recognizes and binds various structures, such as neutrophil extracellular traps (NETs) or monosodium urate crystals. Also acts as a pattern-recognition receptor for pathogen-associated molecules, such as plasmodium hemozoin or mycobacterial micolic acid. Ligand-binding induces phosphorylation of its ITIM motif, followed by recruitment of tyrosine-protein phosphatases PTPN6 and PTPN11, which counteract tyrosine-protein kinase SYK, thereby preventing myeloid cell activation. Acts as a pattern-recognition receptor for NETs in neutrophils: specifically recognizes DNA in NETs, leading to inhibit neutrophil activation and limit further NET formation. This regulation is essential for controlling key neutrophil responses and limit NET-mediated inflammatory conditions. Also recognizes dead cells by acting as a receptor for monosodium urate crystals, leading to down-regulate neutrophil activation. Binding to monosodium urate crystals also promotes the type I interferon response. Acts as an inhibitor of natural killer (NK) cell cytotoxicity. Also acts as an ihibitor of dendritic cell maturation in an IL10-dependent manner. The chain is C-type lectin domain family 12 member A from Mus musculus (Mouse).